A 478-amino-acid chain; its full sequence is Alpha-1,3-mannosyl-glycoprotein 4-beta-N-acetylglucosaminyltransferase C (478 aa).

Residues 1-23 lie on the Cytoplasmic side of the membrane; that stretch reads MFKFHQMKHIFEILDKMRCLRKR. A helical; Signal-anchor for type II membrane protein transmembrane segment spans residues 24–44; it reads STVSFLGVLVIFLLFMNLYIE. The Lumenal segment spans residues 45–478; it reads DSYVLEGDKQ…IIRSISIWTS (434 aa). Residues asparagine 84 and asparagine 215 are each glycosylated (N-linked (GlcNAc...) asparagine).

The protein belongs to the glycosyltransferase 54 family. Requires a divalent metal cation as cofactor.

It localises to the golgi apparatus membrane. It carries out the reaction N(4)-{beta-D-GlcNAc-(1-&gt;2)-alpha-D-Man-(1-&gt;3)-[beta-D-GlcNAc-(1-&gt;2)-alpha-D-Man-(1-&gt;6)]-beta-D-Man-(1-&gt;4)-beta-D-GlcNAc-(1-&gt;4)-beta-D-GlcNAc}-L-asparaginyl-[protein] + UDP-N-acetyl-alpha-D-glucosamine = N(4)-{beta-D-GlcNAc-(1-&gt;2)-[beta-D-GlcNAc-(1-&gt;4)]-alpha-D-Man-(1-&gt;3)-[beta-D-GlcNAc-(1-&gt;2)-alpha-D-Man-(1-&gt;6)]-beta-D-Man-(1-&gt;4)-beta-D-GlcNAc-(1-&gt;4)-beta-D-GlcNAc}-L-asparaginyl-[protein] + UDP + H(+). The protein operates within protein modification; protein glycosylation. Functionally, glycosyltransferase that participates in the transfer of N-acetylglucosamine (GlcNAc) to the core mannose residues of N-linked glycans. Catalyzes the formation of the GlcNAcbeta1-4 branch on the GlcNAcbeta1-2Manalpha1-3 arm of the core structure of N-linked glycans. Essential for the production of tri- and tetra-antennary N-linked sugar chains. Does not catalyze the transfer of GlcNAc to the Manalpha1-6 arm to form GlcNAcBeta1-4Manalpha1-6 linkage ('GnT-VI' activity). The sequence is that of Alpha-1,3-mannosyl-glycoprotein 4-beta-N-acetylglucosaminyltransferase C (MGAT4C) from Macaca fascicularis (Crab-eating macaque).